Here is a 1697-residue protein sequence, read N- to C-terminus: Phosphatidylinositol 3-kinase 3 (1697 aa).

Disordered regions lie at residues 57–91, 169–229, 244–279, 310–376, 398–428, and 440–504; these read RSIN…TQPC, INNN…DSSI, KTTE…ENEI, KKNN…NSVG, SWTS…SGSS, and DLLK…NNDE. Composition is skewed to low complexity over residues 60–87, 170–196, and 212–222; these read NNNN…NNNN and NNNSNNNNNIN. Composition is skewed to low complexity over residues 312–374 and 398–408; these read NNNN…TTNS and SWTSSKPTSSS. 2 stretches are compositionally biased toward polar residues: residues 409–428 and 444–456; these read IGFA…SGSS and SPSS…SDIF. A compositionally biased stretch (low complexity) spans 457–503; that stretch reads NENNNNNNNNNNNNNNNNNNNNNNNNNNNNNNNNEELINNNNNNNND. In terms of domain architecture, PI3K-RBD spans 737–823; that stretch reads PEFFVIRVHL…KGEIDLTMVE (87 aa). Positions 888–1036 constitute a C2 PI3K-type domain; the sequence is VTENLQVRLL…QAIIIAFEFK (149 aa). The PIK helical domain maps to 1060 to 1238; it reads GNELPVVTME…RVLSSGFLRY (179 aa). Residues 1304–1581 enclose the PI3K/PI4K catalytic domain; it reads IPEKCKSMDS…LIHESIGTLT (278 aa). The tract at residues 1310-1316 is G-loop; sequence SMDSAKV. The tract at residues 1447 to 1455 is catalytic loop; that stretch reads GIGDRHNDN. The tract at residues 1466-1492 is activation loop; it reads HIDFGHFLGNFKTFAGFQREKAPFVLT. A compositionally biased stretch (low complexity) spans 1609-1625; it reads ASSLNLNKNKPSSQSKL. The segment at 1609–1697 is disordered; that stretch reads ASSLNLNKNK…DTEKENSIDK (89 aa). A run of 5 repeats spans residues 1622 to 1626, 1627 to 1631, 1632 to 1636, 1642 to 1646, and 1647 to 1651. The segment at 1622–1651 is 5 X 5 AA approximate repeats; that stretch reads QSKLDLSRSDLSRSDSSRSDSSRLDLSRSD. Composition is skewed to basic and acidic residues over residues 1626–1681 and 1688–1697; these read DLSR…DKDN and DTEKENSIDK. The interval 1659–1672 is 7 X 2 AA tandem repeats of K-E; the sequence is KEKEKEKEKEKEKE.

Belongs to the PI3/PI4-kinase family.

It catalyses the reaction a 1,2-diacyl-sn-glycero-3-phospho-(1D-myo-inositol) + ATP = a 1,2-diacyl-sn-glycero-3-phospho-(1D-myo-inositol-3-phosphate) + ADP + H(+). The chain is Phosphatidylinositol 3-kinase 3 (pikC) from Dictyostelium discoideum (Social amoeba).